Consider the following 245-residue polypeptide: Retrovirus-related Pol polyprotein from type-1 retrotransposable element R1 (245 aa).

The region spanning Leu-1–Ala-105 is the Reverse transcriptase domain. Residues Glu-106–Gln-245 are nucleic acid-binding endonuclease.

It carries out the reaction DNA(n) + a 2'-deoxyribonucleoside 5'-triphosphate = DNA(n+1) + diphosphate. This Popillia japonica (Japanese beetle) protein is Retrovirus-related Pol polyprotein from type-1 retrotransposable element R1.